A 342-amino-acid chain; its full sequence is Oxygen-dependent coproporphyrinogen-III oxidase (342 aa).

Ser-98 serves as a coordination point for substrate. 2 residues coordinate a divalent metal cation: His-102 and His-112. Catalysis depends on His-112, which acts as the Proton donor. Residue 114–116 coordinates substrate; sequence NYR. Positions 146 and 176 each coordinate a divalent metal cation. An important for dimerization region spans residues 266 to 301; it reads YVEFNLVWDRGTIFGLQTNGRTESILMSLPPLARWE.

This sequence belongs to the aerobic coproporphyrinogen-III oxidase family. As to quaternary structure, homodimer. Requires a divalent metal cation as cofactor.

It localises to the cytoplasm. It catalyses the reaction coproporphyrinogen III + O2 + 2 H(+) = protoporphyrinogen IX + 2 CO2 + 2 H2O. It participates in porphyrin-containing compound metabolism; protoporphyrin-IX biosynthesis; protoporphyrinogen-IX from coproporphyrinogen-III (O2 route): step 1/1. In terms of biological role, involved in the heme and chlorophyll biosynthesis. Catalyzes the aerobic oxidative decarboxylation of propionate groups of rings A and B of coproporphyrinogen-III to yield the vinyl groups in protoporphyrinogen-IX. This is Oxygen-dependent coproporphyrinogen-III oxidase from Prochlorococcus marinus (strain MIT 9515).